The sequence spans 373 residues: 4-hydroxy-3-methylbut-2-en-1-yl diphosphate synthase (flavodoxin) (373 aa).

[4Fe-4S] cluster-binding residues include Cys-270, Cys-273, Cys-305, and Glu-312.

It belongs to the IspG family. Requires [4Fe-4S] cluster as cofactor.

It carries out the reaction (2E)-4-hydroxy-3-methylbut-2-enyl diphosphate + oxidized [flavodoxin] + H2O + 2 H(+) = 2-C-methyl-D-erythritol 2,4-cyclic diphosphate + reduced [flavodoxin]. It participates in isoprenoid biosynthesis; isopentenyl diphosphate biosynthesis via DXP pathway; isopentenyl diphosphate from 1-deoxy-D-xylulose 5-phosphate: step 5/6. Its function is as follows. Converts 2C-methyl-D-erythritol 2,4-cyclodiphosphate (ME-2,4cPP) into 1-hydroxy-2-methyl-2-(E)-butenyl 4-diphosphate. This Photorhabdus laumondii subsp. laumondii (strain DSM 15139 / CIP 105565 / TT01) (Photorhabdus luminescens subsp. laumondii) protein is 4-hydroxy-3-methylbut-2-en-1-yl diphosphate synthase (flavodoxin).